The following is a 361-amino-acid chain: D-malate dehydrogenase [decarboxylating] (361 aa).

Aspartate 224, aspartate 248, and aspartate 252 together coordinate Mn(2+).

The protein belongs to the isocitrate and isopropylmalate dehydrogenases family. Requires Mg(2+) as cofactor. Mn(2+) is required as a cofactor.

The protein localises to the cytoplasm. The enzyme catalyses (R)-malate + NAD(+) = pyruvate + CO2 + NADH. Functionally, catalyzes the NAD(+)-dependent oxidative decarboxylation of D-malate into pyruvate. Is essential for aerobic growth on D-malate as the sole carbon source. But is not required for anaerobic D-malate utilization, although DmlA is expressed and active in those conditions. Appears to be not able to use L-tartrate as a substrate for dehydrogenation instead of D-malate. This is D-malate dehydrogenase [decarboxylating] (dmlA) from Escherichia coli (strain K12).